The primary structure comprises 313 residues: Olfactory receptor 51A4 (313 aa).

The Extracellular portion of the chain corresponds to Met1 to Ile27. N-linked (GlcNAc...) asparagine glycosylation is present at Asn5. The helical transmembrane segment at Trp28–Leu48 threads the bilayer. Residues Phe49–Ser56 lie on the Cytoplasmic side of the membrane. A helical membrane pass occupies residues Leu57–Leu77. Over Ser78–Ala101 the chain is Extracellular. A disulfide bond links Cys99 and Cys191. A helical membrane pass occupies residues Gln102–Phe122. Residues Asp123–Val141 are Cytoplasmic-facing. The helical transmembrane segment at Arg142–Pro162 threads the bilayer. Residues Phe163–Val198 lie on the Extracellular side of the membrane. Residues Ile199–Ser218 traverse the membrane as a helical segment. Over Tyr219 to Ala238 the chain is Cytoplasmic. A helical membrane pass occupies residues Leu239–Leu259. Residues Ala260–Asn274 are Extracellular-facing. The helical transmembrane segment at Val275–Val295 threads the bilayer. Topologically, residues Lys296 to Ile313 are cytoplasmic.

It belongs to the G-protein coupled receptor 1 family.

It localises to the cell membrane. Functionally, odorant receptor. The sequence is that of Olfactory receptor 51A4 (OR51A4) from Homo sapiens (Human).